Reading from the N-terminus, the 152-residue chain is Large ribosomal subunit protein bL9 (152 aa).

This sequence belongs to the bacterial ribosomal protein bL9 family.

Its function is as follows. Binds to the 23S rRNA. This chain is Large ribosomal subunit protein bL9, found in Mycobacterium sp. (strain JLS).